The primary structure comprises 283 residues: 4-hydroxy-3-methylbut-2-enyl diphosphate reductase (283 aa).

Cysteine 12 contacts [4Fe-4S] cluster. (2E)-4-hydroxy-3-methylbut-2-enyl diphosphate is bound by residues histidine 41 and histidine 74. Histidine 41 and histidine 74 together coordinate dimethylallyl diphosphate. Isopentenyl diphosphate contacts are provided by histidine 41 and histidine 74. [4Fe-4S] cluster is bound at residue cysteine 96. Histidine 124 contributes to the (2E)-4-hydroxy-3-methylbut-2-enyl diphosphate binding site. Histidine 124 provides a ligand contact to dimethylallyl diphosphate. Histidine 124 contacts isopentenyl diphosphate. Glutamate 126 acts as the Proton donor in catalysis. A (2E)-4-hydroxy-3-methylbut-2-enyl diphosphate-binding site is contributed by threonine 161. Cysteine 189 contributes to the [4Fe-4S] cluster binding site. Residues serine 217, asparagine 219, and serine 261 each contribute to the (2E)-4-hydroxy-3-methylbut-2-enyl diphosphate site. Dimethylallyl diphosphate-binding residues include serine 217, asparagine 219, and serine 261. Residues serine 217, asparagine 219, and serine 261 each contribute to the isopentenyl diphosphate site.

Belongs to the IspH family. It depends on [4Fe-4S] cluster as a cofactor.

The catalysed reaction is isopentenyl diphosphate + 2 oxidized [2Fe-2S]-[ferredoxin] + H2O = (2E)-4-hydroxy-3-methylbut-2-enyl diphosphate + 2 reduced [2Fe-2S]-[ferredoxin] + 2 H(+). The enzyme catalyses dimethylallyl diphosphate + 2 oxidized [2Fe-2S]-[ferredoxin] + H2O = (2E)-4-hydroxy-3-methylbut-2-enyl diphosphate + 2 reduced [2Fe-2S]-[ferredoxin] + 2 H(+). Its pathway is isoprenoid biosynthesis; dimethylallyl diphosphate biosynthesis; dimethylallyl diphosphate from (2E)-4-hydroxy-3-methylbutenyl diphosphate: step 1/1. It functions in the pathway isoprenoid biosynthesis; isopentenyl diphosphate biosynthesis via DXP pathway; isopentenyl diphosphate from 1-deoxy-D-xylulose 5-phosphate: step 6/6. Catalyzes the conversion of 1-hydroxy-2-methyl-2-(E)-butenyl 4-diphosphate (HMBPP) into a mixture of isopentenyl diphosphate (IPP) and dimethylallyl diphosphate (DMAPP). Acts in the terminal step of the DOXP/MEP pathway for isoprenoid precursor biosynthesis. The protein is 4-hydroxy-3-methylbut-2-enyl diphosphate reductase of Anaeromyxobacter sp. (strain Fw109-5).